A 109-amino-acid polypeptide reads, in one-letter code: UPF0122 protein ABC2295 (109 aa).

Belongs to the UPF0122 family.

Functionally, might take part in the signal recognition particle (SRP) pathway. This is inferred from the conservation of its genetic proximity to ftsY/ffh. May be a regulatory protein. The sequence is that of UPF0122 protein ABC2295 from Shouchella clausii (strain KSM-K16) (Alkalihalobacillus clausii).